The sequence spans 207 residues: Arginine exporter protein ArgO (207 aa).

The next 6 helical transmembrane spans lie at 1-21 (MLST…PLGP), 42-62 (LCAI…SALL), 67-87 (LLLQ…GWGA), 111-131 (VVAI…DTIV), 150-170 (FGAA…AAWF), and 185-205 (GFIC…GLLI).

This sequence belongs to the LysE/ArgO transporter (TC 2.A.75) family.

The protein localises to the cell inner membrane. It carries out the reaction L-arginine(in) = L-arginine(out). Involved in the export of arginine. Important to control the intracellular level of arginine and the correct balance between arginine and lysine. This chain is Arginine exporter protein ArgO, found in Photorhabdus laumondii subsp. laumondii (strain DSM 15139 / CIP 105565 / TT01) (Photorhabdus luminescens subsp. laumondii).